Consider the following 391-residue polypeptide: 12-oxophytodienoate reductase 3 (391 aa).

At Met1 the chain carries N-acetylmethionine. Thr2 is subject to N-acetylthreonine; in 12-oxophytodienoate reductase 3, N-terminally processed. Residues 31 to 33, Gly64, and Gln106 each bind FMN; that span reads PMT. Substrate is bound at residue His186. Tyr191 serves as the catalytic Proton donor. Arg238 is an FMN binding site. Arg284 contributes to the substrate binding site. Residues 320–322 and 343–344 each bind FMN; these read SGG and GR. The short motif at 389–391 is the Microbody targeting signal element; the sequence is SRL.

It belongs to the NADH:flavin oxidoreductase/NADH oxidase family. It depends on FMN as a cofactor. In terms of tissue distribution, expressed in green seedling, leaves, flowers (anthers, pistil, petal and stamen), and to a lower extent in roots and siliques. Specifically expressed in filament during anther dehiscence initiation.

The protein resides in the peroxisome. It catalyses the reaction (1S,2S)-OPC-8 + NADP(+) = (9S,13S,15Z)-12-oxophyto-10,15-dienoate + NADPH + H(+). It functions in the pathway lipid metabolism; oxylipin biosynthesis. Specifically cleaves olefinic bonds in cyclic enones. Involved in the biosynthesis of jasmonic acid (JA) and perhaps in biosynthesis or metabolism of other oxylipin signaling moleclules. Required for the spatial and temporal regulation of JA levels during dehiscence of anthers, promoting the stomium degeneration program. In vitro, reduces 9S,13S-12-oxophytodienoic acid (9S,13S-OPDA) and 9R,13R-OPDA to 9S,13S-OPC-8:0 and 9R,13R-OPC-8:0, respectively. Can detoxify the explosive 2,4,6-trinitrotoluene (TNT) in vitro by catalyzing its nitroreduction to form hydroxylamino-dinitrotoluene (HADNT). The polypeptide is 12-oxophytodienoate reductase 3 (Arabidopsis thaliana (Mouse-ear cress)).